Here is a 146-residue protein sequence, read N- to C-terminus: Hemoglobin subunit beta (146 aa).

Val-1 carries the post-translational modification N-acetylvaline. The Globin domain occupies 2–146; that stretch reads HLSGEEKGAV…VATALAHKYH (145 aa). Residue Thr-12 is modified to Phosphothreonine. Ser-44 carries the phosphoserine modification. Position 59 is an N6-acetyllysine (Lys-59). His-63 is a binding site for heme b. An N6-acetyllysine modification is found at Lys-82. His-92 contacts heme b. At Cys-93 the chain carries S-nitrosocysteine. At Lys-144 the chain carries N6-acetyllysine.

Belongs to the globin family. As to quaternary structure, heterotetramer of two alpha chains and two beta chains. In terms of tissue distribution, red blood cells.

Functionally, involved in oxygen transport from the lung to the various peripheral tissues. The sequence is that of Hemoglobin subunit beta (HBB) from Tadarida brasiliensis (Brazilian free-tailed bat).